The following is a 236-amino-acid chain: Uridylate kinase (236 aa).

An ATP-binding site is contributed by Lys-10 to Gly-13. Gly-52 is a UMP binding site. Positions 53 and 57 each coordinate ATP. Residues Asp-72 and Thr-133 to Thr-140 contribute to the UMP site. 3 residues coordinate ATP: Thr-160, Tyr-166, and Asp-169.

It belongs to the UMP kinase family. In terms of assembly, homohexamer.

The protein localises to the cytoplasm. It catalyses the reaction UMP + ATP = UDP + ADP. The protein operates within pyrimidine metabolism; CTP biosynthesis via de novo pathway; UDP from UMP (UMPK route): step 1/1. With respect to regulation, inhibited by UTP. In terms of biological role, catalyzes the reversible phosphorylation of UMP to UDP. This Phocaeicola vulgatus (strain ATCC 8482 / DSM 1447 / JCM 5826 / CCUG 4940 / NBRC 14291 / NCTC 11154) (Bacteroides vulgatus) protein is Uridylate kinase.